Here is a 390-residue protein sequence, read N- to C-terminus: Putative glutamate--cysteine ligase 2 (390 aa).

The protein belongs to the glutamate--cysteine ligase type 2 family. YbdK subfamily.

The catalysed reaction is L-cysteine + L-glutamate + ATP = gamma-L-glutamyl-L-cysteine + ADP + phosphate + H(+). Functionally, ATP-dependent carboxylate-amine ligase which exhibits weak glutamate--cysteine ligase activity. The sequence is that of Putative glutamate--cysteine ligase 2 from Chloroflexus aurantiacus (strain ATCC 29366 / DSM 635 / J-10-fl).